The primary structure comprises 123 residues: PCNA-associated factor (123 aa).

Positions 1 to 123 (MVRTKADCAG…SEEAADSGDE (123 aa)) are disordered. Residues 26–37 (RKTFGSSSSGSN) carry the D-box motif. A PIP-box motif is present at residues 66-77 (QKGIGDFFGSPS). The KEN box signature appears at 83–85 (KEN). The short motif at 93–105 (EAGGSGAGKKPRK) is the Initiation motif element. Residues 113–123 (PSEEAADSGDE) are compositionally biased toward acidic residues.

Interacts with pcna.

The protein resides in the nucleus. Its subcellular location is the cytoplasm. The protein localises to the perinuclear region. In terms of biological role, PCNA-binding protein that acts as a regulator of DNA repair during DNA replication. Following DNA damage, the interaction with pcna is disrupted, facilitating the interaction between monoubiquitinated pcna and the translesion DNA synthesis DNA polymerase eta (polh) at stalled replisomes, facilitating the bypass of replication-fork-blocking lesions. Also acts as a regulator of centrosome number. The protein is PCNA-associated factor of Xenopus laevis (African clawed frog).